Consider the following 76-residue polypeptide: uncharacterized protein (76 aa).

In terms of domain architecture, HTH cro/C1-type spans leucine 6 to phenylalanine 60. The segment at residues glutamine 17–asparagine 36 is a DNA-binding region (H-T-H motif).

This is an uncharacterized protein from Bacillus subtilis (strain 168).